Reading from the N-terminus, the 460-residue chain is Keratin, type I cytoskeletal 27 (460 aa).

Positions methionine 1 to asparagine 83 are head. The tract at residues glutamate 84 to tryptophan 119 is coil 1A. One can recognise an IF rod domain in the interval glutamate 84–cysteine 399. Residues tyrosine 120–valine 141 form a linker 1 region. The interval isoleucine 142 to leucine 233 is coil 1B. Residues glutamine 234 to leucine 256 form a linker 12 region. A coil 2 region spans residues leucine 257–glutamate 395. The segment at aspartate 396–serine 460 is tail. Positions aspartate 429 to serine 460 are disordered. Polar residues predominate over residues lysine 448–serine 460.

The protein belongs to the intermediate filament family. As to quaternary structure, heterotetramer of two type I and two type II keratins. Interacts with KRT6A to form filaments.

The protein localises to the cytoplasm. Its function is as follows. Essential for the proper assembly of type I and type II keratin protein complexes and formation of keratin intermediate filaments in the inner root sheath (irs). In Capra hircus (Goat), this protein is Keratin, type I cytoskeletal 27.